A 328-amino-acid chain; its full sequence is D-cysteine desulfhydrase (328 aa).

At K51 the chain carries N6-(pyridoxal phosphate)lysine.

Belongs to the ACC deaminase/D-cysteine desulfhydrase family. Homodimer. Pyridoxal 5'-phosphate serves as cofactor.

The catalysed reaction is D-cysteine + H2O = hydrogen sulfide + pyruvate + NH4(+) + H(+). Its function is as follows. Catalyzes the alpha,beta-elimination reaction of D-cysteine and of several D-cysteine derivatives. It could be a defense mechanism against D-cysteine. The chain is D-cysteine desulfhydrase from Shigella flexneri serotype 5b (strain 8401).